The sequence spans 535 residues: Methylmalonate-semialdehyde/malonate-semialdehyde dehydrogenase [acylating], mitochondrial (535 aa).

The N-terminal 32 residues, 1 to 32 (MAAAVAAAAAVRSRILQVSSKVNSTWYPASSF), are a transit peptide targeting the mitochondrion. Lys47, Lys52, Lys55, and Lys76 each carry N6-acetyllysine; alternate. N6-succinyllysine; alternate occurs at positions 47, 52, 55, and 76. The residue at position 87 (Lys87) is an N6-acetyllysine. N6-acetyllysine; alternate occurs at positions 117 and 129. N6-succinyllysine; alternate is present on residues Lys117 and Lys129. Residues Ala183, Phe185, Lys209, Glu212, Arg213, and Ser262 each coordinate NAD(+). At Ser262 the chain carries Phosphoserine. Lys298 carries the N6-acetyllysine modification. The Nucleophile role is filled by Cys317. 2 positions are modified to N6-acetyllysine: Lys330 and Lys331. N6-acetyllysine; alternate is present on residues Lys364 and Lys376. Lys364 and Lys376 each carry N6-succinyllysine; alternate. At Ser380 the chain carries Phosphoserine. Lys391 carries the N6-succinyllysine modification. Residue Glu417 participates in NAD(+) binding. At Lys500 the chain carries N6-acetyllysine. Lys517 bears the N6-succinyllysine mark.

It belongs to the aldehyde dehydrogenase family. As to quaternary structure, homotetramer. In terms of tissue distribution, expressed in the head and flagellum of epididymal sperm but not in testicular sperm (at protein level). Kidney &gt; liver &gt; heart &gt; muscle &gt; brain.

Its subcellular location is the mitochondrion. The catalysed reaction is 3-oxopropanoate + NAD(+) + CoA + H2O = hydrogencarbonate + acetyl-CoA + NADH + H(+). It carries out the reaction 2-methyl-3-oxopropanoate + NAD(+) + CoA + H2O = propanoyl-CoA + hydrogencarbonate + NADH + H(+). It catalyses the reaction (R)-2-methyl-3-oxopropanoate + NAD(+) + CoA + H2O = propanoyl-CoA + hydrogencarbonate + NADH + H(+). The enzyme catalyses (S)-2-methyl-3-oxopropanoate + NAD(+) + CoA + H2O = propanoyl-CoA + hydrogencarbonate + NADH + H(+). Its function is as follows. Malonate and methylmalonate semialdehyde dehydrogenase involved in the catabolism of valine, thymine, and compounds catabolized by way of beta-alanine, including uracil and cytidine. This is Methylmalonate-semialdehyde/malonate-semialdehyde dehydrogenase [acylating], mitochondrial from Rattus norvegicus (Rat).